Consider the following 579-residue polypeptide: Solute carrier family 15 member 5 (579 aa).

A run of 11 helical transmembrane segments spans residues 77–97 (CQAAILNLCFIGTSILTPVFV), 110–130 (LVYICLFLHFLGTALLSVVAF), 154–174 (LFYVALLTICLGIGGVRAIVC), 191–211 (SFFNWFYWLMNLNATIVFLGI), 221–241 (ALVLLIPFMSMLMAVITLHMI), 304–324 (TFFLTLLPLFIFQLLYRMCIM), 343–363 (GFLLPIAVMNAISSLPLLILA), 386–406 (CIIAGNLFAALSVMIAGFFEI), 422–442 (VLTVSSMPCFYLILQYVLLGV), 472–492 (TLFNGFGCFTGALLVKLVYLI), and 509–529 (SFFFFLASLTLLNVLGFCSVS).

This sequence belongs to the major facilitator superfamily. Proton-dependent oligopeptide transporter (POT/PTR) (TC 2.A.17) family.

It is found in the membrane. Proton oligopeptide cotransporter. In Homo sapiens (Human), this protein is Solute carrier family 15 member 5 (SLC15A5).